Here is a 115-residue protein sequence, read N- to C-terminus: MNMLLVIAVNTILSLILITVAFWLPQLNIYTEKANPYECGFDPMSSARLPFSMKFFLVAITFLLFDLEIALLLPIPWAIQTPHINMVLPTALILLTILALGLAYEWLQKGLEWTE.

A run of 3 helical transmembrane segments spans residues 4–24 (LLVI…AFWL), 55–75 (FFLV…LLPI), and 84–104 (INMV…GLAY).

Belongs to the complex I subunit 3 family. As to quaternary structure, core subunit of respiratory chain NADH dehydrogenase (Complex I) which is composed of 45 different subunits. Interacts with TMEM186. Interacts with TMEM242.

The protein localises to the mitochondrion inner membrane. It carries out the reaction a ubiquinone + NADH + 5 H(+)(in) = a ubiquinol + NAD(+) + 4 H(+)(out). Functionally, core subunit of the mitochondrial membrane respiratory chain NADH dehydrogenase (Complex I) which catalyzes electron transfer from NADH through the respiratory chain, using ubiquinone as an electron acceptor. Essential for the catalytic activity of complex I. This chain is NADH-ubiquinone oxidoreductase chain 3, found in Ochrotomys nuttalli (Golden mouse).